A 56-amino-acid polypeptide reads, in one-letter code: Secreted virulence factor CLU5a (56 aa).

A signal peptide spans 1 to 18; the sequence is MKVSLTLLATLCASLASA.

It belongs to the MC69 virulence factor family. As to quaternary structure, homodimer; disulfide-linked. Dimerization can possibly extend to multimerisation.

It is found in the secreted. Its function is as follows. Secreted protein required for appressorial penetration of intact host epidermal cells and for pathogenicit, but not for subsequent biotrophic and necrotrophic colonization of leaves. This is Secreted virulence factor CLU5a from Colletotrichum graminicola (strain M1.001 / M2 / FGSC 10212) (Maize anthracnose fungus).